A 422-amino-acid polypeptide reads, in one-letter code: MELENKFKKVTLGHEEGSGAPCLKCKEKCEGFELHFWRKICRNCKCGQEEHSVLSNNEDDRKVGKLFEDTKYTALIAKLKTDGIPTYKRNVMILTSPVAAKKDVSINTVTYEWAPPVQNQALARRYMELIPKDKQPVAGSEGAQYRKKQLAKQLPAHDQDPSKCHELSPNEVKQMEQFVKKYKNEVLGVGDVKLPKEVEAQASGAGRSTNGSLSTLTTVKSTDDKVAAQKGSTYYCFRCKENMREGDPAVYAERAGYDKLWHPSCFVCFTCNELLVDMIYFWKNGKLYCGRHYCDSEKPRCAGCDELIFSNEYTQAEGLNWHLKHFCCFDCDIVLAGEIYVMVNDKAVCKPCYVKNHAVSCQGCHNAIDPEVQRVSYNGFHWHAAPECFICSCCSKCLIGQKFMPIEGMVFCSVECKKKMSS.

The 108-residue stretch at 92–199 (MILTSPVAAK…GDVKLPKEVE (108 aa)) folds into the PET domain. The disordered stretch occupies residues 135 to 165 (QPVAGSEGAQYRKKQLAKQLPAHDQDPSKCH). Basic and acidic residues predominate over residues 155 to 165 (PAHDQDPSKCH). 3 consecutive LIM zinc-binding domains span residues 234-299 (YYCF…SEKP), 300-359 (RCAG…NHAV), and 360-422 (SCQG…KMSS).

This sequence belongs to the prickle / espinas / testin family. Expressed in the animal hemisphere at the 4-cell stage. By stage 18, expressed in cells adjacent to the anterior neural plate. In late neurula, expressed in the cranial neural crest. At tail bud stages, expressed strongly in the head, ventral to the developing eye, branchial arches and lateral line placodes. Also localized in the otic vesicle, dorsal fin and notochord with weaker expression at intersomitic junctions of tail bud embryos.

It is found in the cytoplasm. Its subcellular location is the cell cortex. The protein localises to the cell junction. The protein resides in the focal adhesion. In terms of biological role, scaffold protein that may play a role in cell adhesion, cell spreading and in the reorganization of the actin cytoskeleton. May inhibit cell growth. Regulates cranial neural crest migration. Acts together with prickle1 to control axial elongation. The chain is Testin from Xenopus laevis (African clawed frog).